Consider the following 268-residue polypeptide: E3 ubiquitin-protein ligase IAP-3 (268 aa).

2 BIR repeats span residues 18-84 (KAAR…CPFV) and 111-178 (EAAR…CEYV). 4 residues coordinate Zn(2+): cysteine 148, cysteine 151, histidine 168, and cysteine 175. An RING-type zinc finger spans residues 221–256 (CKICLGAEKTVCFVPCGHVVACGKCAAGVTTCPVCR).

This sequence belongs to the IAP family. In terms of processing, auto-ubiquitinated.

It carries out the reaction S-ubiquitinyl-[E2 ubiquitin-conjugating enzyme]-L-cysteine + [acceptor protein]-L-lysine = [E2 ubiquitin-conjugating enzyme]-L-cysteine + N(6)-ubiquitinyl-[acceptor protein]-L-lysine.. Functionally, RING-finger E3 ubiquitin ligase required to prevent cellular apoptosis in infected cells. Ubiquitinates and subsequently targets host pro-apoptotic cellular proteins such as HID for degradation by the proteasome. The polypeptide is E3 ubiquitin-protein ligase IAP-3 (IAP3) (Orgyia pseudotsugata multicapsid polyhedrosis virus (OpMNPV)).